The following is a 45-amino-acid chain: Movement protein p5 (45 aa).

Residues 8–28 traverse the membrane as a helical segment; sequence ILLLVVDFVFVIILLLVLTFV.

The protein localises to the host rough endoplasmic reticulum membrane. Transports viral genome to neighboring plant cells directly through plasmosdesmata, without any budding. The movement protein allows efficient cell to cell propagation, by bypassing the host cell wall barrier. Two movement proteins, p6, Hsp70h and three structural proteins, CP, CPm, and P64 are essential for cell-cell movement. Also plays a role in virion formation. Together with CPm and p64, encapsidates the 5'-terminal portion of the viral genome. The sequence is that of Movement protein p5 from Grapevine leafroll-associated virus 3 (isolate United States/NY1) (GLRaV-3).